Here is a 419-residue protein sequence, read N- to C-terminus: L-rhamnose isomerase (419 aa).

Residues histidine 262, aspartate 294, and aspartate 296 each contribute to the Mn(2+) site.

The protein belongs to the rhamnose isomerase family. Homotetramer. Mn(2+) is required as a cofactor.

It is found in the cytoplasm. The catalysed reaction is L-rhamnopyranose = L-rhamnulose. It functions in the pathway carbohydrate degradation; L-rhamnose degradation; glycerone phosphate from L-rhamnose: step 1/3. Catalyzes the interconversion of L-rhamnose and L-rhamnulose. The polypeptide is L-rhamnose isomerase (Shigella flexneri).